The following is an 89-amino-acid chain: MGEVVATLKIMPESPDVDLEALKAAIQAAMPAEAEFHKIEEEPIAFGLVALNLIFIIEDGEGGTESTEEAMAKLADVASVEITDTRRLM.

Belongs to the EF-1-beta/EF-1-delta family.

Promotes the exchange of GDP for GTP in EF-1-alpha/GDP, thus allowing the regeneration of EF-1-alpha/GTP that could then be used to form the ternary complex EF-1-alpha/GTP/AAtRNA. The chain is Elongation factor 1-beta from Methanobrevibacter smithii (strain ATCC 35061 / DSM 861 / OCM 144 / PS).